The following is a 763-amino-acid chain: Transferrin receptor protein 1 (763 aa).

The Cytoplasmic portion of the chain corresponds to 1–67 (MMDQARSAFS…KPKRFNGRLC (67 aa)). The mediates interaction with SH3BP4 stretch occupies residues 1 to 67 (MMDQARSAFS…KPKRFNGRLC (67 aa)). Residues serine 10 and serine 19 each carry the phosphoserine modification. Tyrosine 20 is subject to Phosphotyrosine. Residues 20–23 (YTRF) carry the Endocytosis signal motif. Threonine 21 carries the phosphothreonine modification. The residue at position 24 (serine 24) is a Phosphoserine. Residues 58-61 (KPKR) carry the Stop-transfer sequence motif. Residue cysteine 67 is the site of S-palmitoyl cysteine attachment. A helical; Signal-anchor for type II membrane protein membrane pass occupies residues 68–88 (FAAIALVIFFLIGFMSGYLGY). Residues 89 to 763 (CKRVEQKEEC…GDIWNIDNEF (675 aa)) are Extracellular-facing. Threonine 104 is a glycosylation site (O-linked (GalNAc...) threonine). The 91-residue stretch at 225–315 (SKPTEVSGKL…GTGDPYTPGF (91 aa)) folds into the PA domain. N-linked (GlcNAc...) asparagine glycosylation is found at asparagine 253 and asparagine 319. The ligand-binding stretch occupies residues 572–763 (RLDTYEALTQ…GDIWNIDNEF (192 aa)). Residues 649–651 (RGD) carry the Cell attachment site motif. Residues asparagine 725 and asparagine 730 are each glycosylated (N-linked (GlcNAc...) asparagine).

The protein belongs to the peptidase M28 family. M28B subfamily. Homodimer; disulfide-linked. Binds one transferrin molecule per subunit. Interacts with SH3BP4. Interacts with STEAP3; facilitates TFRC endocytosis in erythroid precursor cells. Post-translationally, stearoylated by ZDHHC6 which inhibits TFRC-mediated activation of the JNK pathway and promotes mitochondrial fragmentation. Stearoylation does not affect iron uptake. N- and O-glycosylated, phosphorylated and palmitoylated.

The protein localises to the cell membrane. Its subcellular location is the melanosome. Functionally, cellular uptake of iron occurs via receptor-mediated endocytosis of ligand-occupied transferrin receptor into specialized endosomes. Endosomal acidification leads to iron release. The apotransferrin-receptor complex is then recycled to the cell surface with a return to neutral pH and the concomitant loss of affinity of apotransferrin for its receptor. Transferrin receptor is necessary for development of erythrocytes and the nervous system. Upon stimulation, positively regulates T and B cell proliferation through iron uptake. Acts as a lipid sensor that regulates mitochondrial fusion by regulating activation of the JNK pathway. When dietary levels of stearate (C18:0) are low, promotes activation of the JNK pathway, resulting in HUWE1-mediated ubiquitination and subsequent degradation of the mitofusin MFN2 and inhibition of mitochondrial fusion. When dietary levels of stearate (C18:0) are high, TFRC stearoylation inhibits activation of the JNK pathway and thus degradation of the mitofusin MFN2. Mediates uptake of NICOL1 into fibroblasts where it may regulate extracellular matrix production. The protein is Transferrin receptor protein 1 (Tfrc) of Mus musculus (Mouse).